The chain runs to 76 residues: Large ribosomal subunit protein bL31 (76 aa).

4 residues coordinate Zn(2+): Cys16, Cys18, Cys37, and Cys40.

Belongs to the bacterial ribosomal protein bL31 family. Type A subfamily. As to quaternary structure, part of the 50S ribosomal subunit. Zn(2+) is required as a cofactor.

Its function is as follows. Binds the 23S rRNA. The polypeptide is Large ribosomal subunit protein bL31 (Maridesulfovibrio salexigens (strain ATCC 14822 / DSM 2638 / NCIMB 8403 / VKM B-1763) (Desulfovibrio salexigens)).